Here is a 204-residue protein sequence, read N- to C-terminus: Putative uracil phosphoribosyltransferase urg2 (204 aa).

5-phospho-alpha-D-ribose 1-diphosphate contacts are provided by residues arginine 75, arginine 100, and 126–134; that span reads DPVMATGGT. A D-ribose 5-phosphate-binding site is contributed by tyrosine 187. Residues leucine 188 and 193–195 each bind uracil; that span reads GDI. Aspartate 194 serves as a coordination point for 5-phospho-alpha-D-ribose 1-diphosphate.

This sequence belongs to the UPRTase family. Mg(2+) is required as a cofactor.

The protein resides in the cytoplasm. It localises to the nucleus. It catalyses the reaction UMP + diphosphate = 5-phospho-alpha-D-ribose 1-diphosphate + uracil. The protein operates within pyrimidine metabolism; UMP biosynthesis via salvage pathway; UMP from uracil: step 1/1. Allosterically activated by GTP. Catalyzes the conversion of uracil and 5-phospho-alpha-D-ribose 1-diphosphate (PRPP) to UMP and diphosphate. The polypeptide is Putative uracil phosphoribosyltransferase urg2 (Schizosaccharomyces pombe (strain 972 / ATCC 24843) (Fission yeast)).